We begin with the raw amino-acid sequence, 228 residues long: ATP synthase subunit a (228 aa).

6 consecutive transmembrane segments (helical) span residues 19 to 39 (AIYI…AVAV), 81 to 101 (LIAT…IPGF), 107 to 127 (SLNL…FEGI), 136 to 156 (FAGF…IEVI), 178 to 198 (LFLL…PYAL), and 204 to 224 (ILQA…AVVV).

Belongs to the ATPase A chain family. In terms of assembly, F-type ATPases have 2 components, CF(1) - the catalytic core - and CF(0) - the membrane proton channel. CF(1) has five subunits: alpha(3), beta(3), gamma(1), delta(1), epsilon(1). CF(0) has three main subunits: a(1), b(2) and c(9-12). The alpha and beta chains form an alternating ring which encloses part of the gamma chain. CF(1) is attached to CF(0) by a central stalk formed by the gamma and epsilon chains, while a peripheral stalk is formed by the delta and b chains.

The protein resides in the cell inner membrane. In terms of biological role, key component of the proton channel; it plays a direct role in the translocation of protons across the membrane. The chain is ATP synthase subunit a from Campylobacter hominis (strain ATCC BAA-381 / DSM 21671 / CCUG 45161 / LMG 19568 / NCTC 13146 / CH001A).